A 232-amino-acid polypeptide reads, in one-letter code: Fibrillarin-like rRNA/tRNA 2'-O-methyltransferase (232 aa).

S-adenosyl-L-methionine contacts are provided by residues 87 to 88 (TT), 105 to 106 (EF), 130 to 131 (DA), and 150 to 153 (DVAQ).

This sequence belongs to the methyltransferase superfamily. Fibrillarin family. Interacts with nop5. Component of box C/D small ribonucleoprotein (sRNP) particles that contain rpl7ae, FlpA and nop5, plus a guide RNA.

Its function is as follows. Involved in pre-rRNA and tRNA processing. Utilizes the methyl donor S-adenosyl-L-methionine to catalyze the site-specific 2'-hydroxyl methylation of ribose moieties in rRNA and tRNA. Site specificity is provided by a guide RNA that base pairs with the substrate. Methylation occurs at a characteristic distance from the sequence involved in base pairing with the guide RNA. The polypeptide is Fibrillarin-like rRNA/tRNA 2'-O-methyltransferase (Methanococcus maripaludis (strain C7 / ATCC BAA-1331)).